We begin with the raw amino-acid sequence, 292 residues long: 4-hydroxy-tetrahydrodipicolinate synthase (292 aa).

Thr-45 provides a ligand contact to pyruvate. The active-site Proton donor/acceptor is Tyr-133. Lys-161 acts as the Schiff-base intermediate with substrate in catalysis. Ile-203 contacts pyruvate.

It belongs to the DapA family. In terms of assembly, homotetramer; dimer of dimers.

It is found in the cytoplasm. The catalysed reaction is L-aspartate 4-semialdehyde + pyruvate = (2S,4S)-4-hydroxy-2,3,4,5-tetrahydrodipicolinate + H2O + H(+). It functions in the pathway amino-acid biosynthesis; L-lysine biosynthesis via DAP pathway; (S)-tetrahydrodipicolinate from L-aspartate: step 3/4. Its function is as follows. Catalyzes the condensation of (S)-aspartate-beta-semialdehyde [(S)-ASA] and pyruvate to 4-hydroxy-tetrahydrodipicolinate (HTPA). This chain is 4-hydroxy-tetrahydrodipicolinate synthase, found in Dechloromonas aromatica (strain RCB).